Consider the following 163-residue polypeptide: Type-1 angiotensin II receptor-associated protein-like (163 aa).

Residues 1 to 28 (MELPAVNLKAIVFTHWLLTVFACMIDWL) are Extracellular-facing. The helical transmembrane segment at 29 to 49 (PKAYGLANITILAMGVWAIAQ) threads the bilayer. Topologically, residues 50 to 55 (RDSIDA) are cytoplasmic. The chain crosses the membrane as a helical span at residues 56 to 76 (IFMFLIGLLLTILTDILLFAL). The Extracellular portion of the chain corresponds to 77-95 (YFTEAEKASESGPLRDLFR). A helical membrane pass occupies residues 96 to 116 (FSSGMGIFSLLLKPLSCFFMY). Residues 117–163 (HMYRERGGEYFVNLGFITLSRDRSSYQSIEHMDPPADQDNKLPSRTY) lie on the Cytoplasmic side of the membrane.

The protein localises to the membrane. Functionally, appears to be a negative regulator of angiotensin II type I receptor-mediated signaling. This chain is Type-1 angiotensin II receptor-associated protein-like (agtrap), found in Xenopus tropicalis (Western clawed frog).